The primary structure comprises 782 residues: Phosphoribosylformylglycinamidine synthase subunit PurL (782 aa).

Histidine 50 is a catalytic residue. 2 residues coordinate ATP: tyrosine 53 and lysine 92. A Mg(2+)-binding site is contributed by glutamate 94. Substrate contacts are provided by residues 95–98 (SHNH) and arginine 117. Histidine 96 functions as the Proton acceptor in the catalytic mechanism. Residue aspartate 118 participates in Mg(2+) binding. Substrate is bound at residue glutamine 241. Position 269 (aspartate 269) interacts with Mg(2+). A substrate-binding site is contributed by 313 to 315 (ESQ). The ATP site is built by aspartate 520 and glycine 557. Residue asparagine 558 participates in Mg(2+) binding. Serine 560 serves as a coordination point for substrate.

The protein belongs to the FGAMS family. In terms of assembly, monomer. Part of the FGAM synthase complex composed of 1 PurL, 1 PurQ and 2 PurS subunits.

The protein localises to the cytoplasm. The catalysed reaction is N(2)-formyl-N(1)-(5-phospho-beta-D-ribosyl)glycinamide + L-glutamine + ATP + H2O = 2-formamido-N(1)-(5-O-phospho-beta-D-ribosyl)acetamidine + L-glutamate + ADP + phosphate + H(+). Its pathway is purine metabolism; IMP biosynthesis via de novo pathway; 5-amino-1-(5-phospho-D-ribosyl)imidazole from N(2)-formyl-N(1)-(5-phospho-D-ribosyl)glycinamide: step 1/2. In terms of biological role, part of the phosphoribosylformylglycinamidine synthase complex involved in the purines biosynthetic pathway. Catalyzes the ATP-dependent conversion of formylglycinamide ribonucleotide (FGAR) and glutamine to yield formylglycinamidine ribonucleotide (FGAM) and glutamate. The FGAM synthase complex is composed of three subunits. PurQ produces an ammonia molecule by converting glutamine to glutamate. PurL transfers the ammonia molecule to FGAR to form FGAM in an ATP-dependent manner. PurS interacts with PurQ and PurL and is thought to assist in the transfer of the ammonia molecule from PurQ to PurL. The polypeptide is Phosphoribosylformylglycinamidine synthase subunit PurL (Cyanothece sp. (strain PCC 7425 / ATCC 29141)).